A 432-amino-acid polypeptide reads, in one-letter code: Glutamyl-tRNA reductase (432 aa).

Residues 55-58, Ser-114, 119-121, and Gln-125 each bind substrate; these read TCNR and ETQ. Cys-56 functions as the Nucleophile in the catalytic mechanism. An NADP(+)-binding site is contributed by 194–199; sequence GAGEMI.

The protein belongs to the glutamyl-tRNA reductase family. As to quaternary structure, homodimer.

It carries out the reaction (S)-4-amino-5-oxopentanoate + tRNA(Glu) + NADP(+) = L-glutamyl-tRNA(Glu) + NADPH + H(+). Its pathway is porphyrin-containing compound metabolism; protoporphyrin-IX biosynthesis; 5-aminolevulinate from L-glutamyl-tRNA(Glu): step 1/2. Catalyzes the NADPH-dependent reduction of glutamyl-tRNA(Glu) to glutamate 1-semialdehyde (GSA). The polypeptide is Glutamyl-tRNA reductase (Burkholderia ambifaria (strain ATCC BAA-244 / DSM 16087 / CCUG 44356 / LMG 19182 / AMMD) (Burkholderia cepacia (strain AMMD))).